Reading from the N-terminus, the 128-residue chain is Small ribosomal subunit protein uS8c (128 aa).

This sequence belongs to the universal ribosomal protein uS8 family. In terms of assembly, part of the 30S ribosomal subunit.

It localises to the plastid. The protein localises to the chloroplast. One of the primary rRNA binding proteins, it binds directly to 16S rRNA central domain where it helps coordinate assembly of the platform of the 30S subunit. This Gnetum parvifolium (Small-leaved jointfir) protein is Small ribosomal subunit protein uS8c (rps8).